The primary structure comprises 154 residues: Aspartate carbamoyltransferase regulatory chain (154 aa).

4 residues coordinate Zn(2+): Cys-109, Cys-114, Cys-138, and Cys-141.

It belongs to the PyrI family. Contains catalytic and regulatory chains. Zn(2+) is required as a cofactor.

In terms of biological role, involved in allosteric regulation of aspartate carbamoyltransferase. This is Aspartate carbamoyltransferase regulatory chain from Sodalis glossinidius (strain morsitans).